Reading from the N-terminus, the 3625-residue chain is Cubilin (3625 aa).

An N-terminal signal peptide occupies residues 1-20 (MVNNMSLLFLWSLVIFLTFA). The propeptide at 21–36 (ESYGEAGGPELQRHKR) is removed in mature form. The tract at residues 43–50 (PRMAAERG) is interaction with AMN. The N-linked (GlcNAc...) asparagine glycan is linked to asparagine 106. The EGF-like 1 domain maps to 133-169 (DGKVCSSNPCQNGATCLNLHDSFFCICPSQWKGPLCS). Cystine bridges form between cysteine 137-cysteine 148, cysteine 142-cysteine 157, cysteine 159-cysteine 168, cysteine 175-cysteine 191, cysteine 185-cysteine 200, and cysteine 202-cysteine 211. The EGF-like 2; calcium-binding domain maps to 171–212 (DVNECEIYSGTPLGCQNGATCINTPGSYSCLCSPETHGPQCA). Asparagine 257 is a glycosylation site (N-linked (GlcNAc...) asparagine). Residues 264-305 (DRDECSSWPAPCSALVPCFNTLGSFYCGACPTGWQGNGYICE) form the EGF-like 3; calcium-binding domain. Cystine bridges form between cysteine 268/cysteine 281, cysteine 275/cysteine 290, cysteine 293/cysteine 304, cysteine 310/cysteine 325, cysteine 317/cysteine 334, cysteine 337/cysteine 348, cysteine 354/cysteine 367, cysteine 361/cysteine 377, cysteine 379/cysteine 393, cysteine 400/cysteine 410, cysteine 405/cysteine 419, cysteine 421/cysteine 430, cysteine 437/cysteine 448, cysteine 442/cysteine 457, cysteine 459/cysteine 468, cysteine 475/cysteine 501, cysteine 528/cysteine 550, cysteine 591/cysteine 617, cysteine 644/cysteine 666, and cysteine 709/cysteine 734. The EGF-like 4; calcium-binding domain occupies 306–349 (DINECEINNGGCSVAPPVECVNTPGSYYCPSCPPGYQGDGRMCT). 2 EGF-like domains span residues 350–394 (LIDL…HGCV) and 396–431 (LSNV…MNCT). An N-linked (GlcNAc...) asparagine glycan is attached at asparagine 429. Positions 433–469 (NINECLSNPCLNGGTCVDGINAFSCECTRFWTGSLCH) constitute an EGF-like 7; calcium-binding domain. CUB domains are found at residues 475 to 587 (CGGT…WETR), 591 to 703 (CGGV…YLTT), 709 to 816 (CGGN…YQVA), 817 to 928 (CGGE…FSTE), 932 to 1042 (CGEI…YEAT), 1045 to 1163 (SAGN…WDGS), 1167 to 1279 (CGGN…YQQT), 1280 to 1391 (CDNV…WLVH), 1393 to 1508 (CGGE…WRAV), 1512 to 1621 (CGGI…FRQA), 1622 to 1736 (CGGH…YVAS), 1740 to 1852 (CGGI…FNNI), 1854 to 1965 (GNDH…WFAM), 1980 to 2093 (CGGF…FHKS), 2094 to 2215 (CGGY…YEAK), 2219 to 2336 (CGGN…YSIA), 2338 to 2450 (CGGT…FDSS), 2454 to 2567 (CGGD…YTSS), 2572 to 2689 (CGGS…YSFT), 2691 to 2803 (CGGI…WNTE), 2807 to 2921 (CGGI…FLSR), 2922 to 3037 (CGRN…YRIT), 3039 to 3152 (CGGT…FRET), 3159 to 3276 (CGGY…YTLL), 3280 to 3397 (CGGT…IAGC), 3397 to 3509 (CSRE…WTSS), and 3513 to 3625 (CGGT…TWAS). Residues asparagine 712 and asparagine 749 are each glycosylated (N-linked (GlcNAc...) asparagine). Cysteines 761 and 779 form a disulfide. Asparagine 781 carries N-linked (GlcNAc...) asparagine glycosylation. Cysteine 817 and cysteine 842 form a disulfide bridge. The N-linked (GlcNAc...) asparagine glycan is linked to asparagine 857. 2 cysteine pairs are disulfide-bonded: cysteine 869/cysteine 891 and cysteine 932/cysteine 958. A glycan (N-linked (GlcNAc...) asparagine) is linked at asparagine 957. Glutamate 980 is a binding site for Ca(2+). A glycan (N-linked (GlcNAc...) asparagine) is linked at asparagine 984. A disulfide bridge connects residues cysteine 985 and cysteine 1005. Residues aspartate 988, aspartate 1027, aspartate 1029, and leucine 1030 each contribute to the Ca(2+) site. N-linked (GlcNAc...) asparagine glycosylation occurs at asparagine 1048. Glutamate 1097, aspartate 1107, and aspartate 1148 together coordinate Ca(2+). Cysteine 1104 and cysteine 1126 are oxidised to a cystine. Cysteine 1167 and cysteine 1193 form a disulfide bridge. N-linked (GlcNAc...) asparagine glycosylation is present at asparagine 1170. Glutamate 1215 contacts Ca(2+). Asparagine 1219 carries an N-linked (GlcNAc...) asparagine glycan. A disulfide bond links cysteine 1220 and cysteine 1242. 4 residues coordinate Ca(2+): aspartate 1223, aspartate 1264, glycine 1266, and glutamine 1267. A disulfide bridge links cysteine 1280 with cysteine 1308. Residues asparagine 1287, asparagine 1309, and asparagine 1321 are each glycosylated (N-linked (GlcNAc...) asparagine). Glutamate 1330 contributes to the Ca(2+) binding site. Asparagine 1334 carries N-linked (GlcNAc...) asparagine glycosylation. Cysteines 1335 and 1353 form a disulfide. Ca(2+) is bound by residues aspartate 1338, aspartate 1375, and valine 1377. Cystine bridges form between cysteine 1393/cysteine 1419 and cysteine 1446/cysteine 1468. Asparagine 1502 carries an N-linked (GlcNAc...) asparagine glycan. An intrachain disulfide couples cysteine 1512 to cysteine 1538. N-linked (GlcNAc...) asparagine glycosylation is present at asparagine 1553. 5 disulfide bridges follow: cysteine 1565/cysteine 1583, cysteine 1622/cysteine 1649, cysteine 1677/cysteine 1699, cysteine 1740/cysteine 1766, and cysteine 1793/cysteine 1814. Residue asparagine 1648 is glycosylated (N-linked (GlcNAc...) asparagine). Asparagine 1804, asparagine 1821, and asparagine 1887 each carry an N-linked (GlcNAc...) asparagine glycan. Disulfide bonds link cysteine 1907–cysteine 1929, cysteine 1980–cysteine 2008, and cysteine 2034–cysteine 2056. Residues asparagine 2087 and asparagine 2119 are each glycosylated (N-linked (GlcNAc...) asparagine). Disulfide bonds link cysteine 2094-cysteine 2120 and cysteine 2219-cysteine 2249. N-linked (GlcNAc...) asparagine glycosylation is present at asparagine 2276. 2 disulfide bridges follow: cysteine 2277–cysteine 2299 and cysteine 2338–cysteine 2365. Residues asparagine 2388 and asparagine 2402 are each glycosylated (N-linked (GlcNAc...) asparagine). Intrachain disulfides connect cysteine 2392–cysteine 2413, cysteine 2454–cysteine 2480, and cysteine 2507–cysteine 2529. Residues asparagine 2533, asparagine 2583, asparagine 2594, and asparagine 2612 are each glycosylated (N-linked (GlcNAc...) asparagine). Residues cysteine 2572 and cysteine 2601 are joined by a disulfide bond. Disulfide bonds link cysteine 2630–cysteine 2651, cysteine 2691–cysteine 2717, cysteine 2744–cysteine 2766, cysteine 2807–cysteine 2833, and cysteine 2862–cysteine 2885. Residues asparagine 2887, asparagine 2925, asparagine 2928, and asparagine 2947 are each glycosylated (N-linked (GlcNAc...) asparagine). 2 cysteine pairs are disulfide-bonded: cysteine 2922/cysteine 2948 and cysteine 2979/cysteine 3001. A Phosphothreonine modification is found at threonine 3010. Intrachain disulfides connect cysteine 3039-cysteine 3066 and cysteine 3093-cysteine 3115. Residues asparagine 3044, asparagine 3105, and asparagine 3127 are each glycosylated (N-linked (GlcNAc...) asparagine). Intrachain disulfides connect cysteine 3159–cysteine 3187 and cysteine 3217–cysteine 3239. N-linked (GlcNAc...) asparagine glycosylation is found at asparagine 3270 and asparagine 3285. Disulfide bonds link cysteine 3280–cysteine 3308 and cysteine 3334–cysteine 3356. An N-linked (GlcNAc...) asparagine glycan is attached at asparagine 3359. Cysteine 3397 and cysteine 3423 are joined by a disulfide. Residues asparagine 3432, asparagine 3459, and asparagine 3535 are each glycosylated (N-linked (GlcNAc...) asparagine). Intrachain disulfides connect cysteine 3450–cysteine 3472, cysteine 3513–cysteine 3539, and cysteine 3566–cysteine 3588.

As to quaternary structure, interacts with AMN. Component of the cubam complex composed of one CUBN trimer and one AMN chain. The cubam complex can dimerize. Interacts with LRP2 in a dual-receptor complex in a calcium-dependent manner. Found in a complex with PID1/PCLI1, LRP1 and CUBNI. Interacts with LRP1 and PID1/PCLI1. Post-translationally, the precursor is cleaved by a trans-Golgi proteinase furin, removing a propeptide. N-glycosylated. Detected in kidney cortex (at protein level).

It localises to the apical cell membrane. The protein resides in the cell membrane. Its subcellular location is the membrane. It is found in the coated pit. The protein localises to the endosome. It localises to the lysosome membrane. Functionally, endocytic receptor which plays a role in lipoprotein, vitamin and iron metabolism by facilitating their uptake. Acts together with LRP2 to mediate endocytosis of high-density lipoproteins, GC, hemoglobin, ALB, TF and SCGB1A1. Acts together with AMN to mediate endocytosis of the CBLIF-cobalamin complex. Binds to ALB, MB, Kappa and lambda-light chains, TF, hemoglobin, GC, SCGB1A1, APOA1, high density lipoprotein, and the CBLIF-cobalamin complex. Ligand binding requires calcium. Serves as important transporter in several absorptive epithelia, including intestine, renal proximal tubules and embryonic yolk sac. May play an important role in the development of the peri-implantation embryo through internalization of APOA1 and cholesterol. Binds to LGALS3 at the maternal-fetal interface. The chain is Cubilin (CUBN) from Sus scrofa (Pig).